We begin with the raw amino-acid sequence, 465 residues long: 3-isopropylmalate dehydratase large subunit (465 aa).

Cys-347, Cys-407, and Cys-410 together coordinate [4Fe-4S] cluster.

This sequence belongs to the aconitase/IPM isomerase family. LeuC type 1 subfamily. Heterodimer of LeuC and LeuD. Requires [4Fe-4S] cluster as cofactor.

It carries out the reaction (2R,3S)-3-isopropylmalate = (2S)-2-isopropylmalate. It functions in the pathway amino-acid biosynthesis; L-leucine biosynthesis; L-leucine from 3-methyl-2-oxobutanoate: step 2/4. Functionally, catalyzes the isomerization between 2-isopropylmalate and 3-isopropylmalate, via the formation of 2-isopropylmaleate. This chain is 3-isopropylmalate dehydratase large subunit, found in Buchnera aphidicola subsp. Pemphigus spyrothecae.